A 961-amino-acid chain; its full sequence is Retinoblastoma-related protein 1 (961 aa).

The tract at residues 404-606 is domain A; that stretch reads TPVSTAMTTA…EKGSSMYNSL (203 aa). Residues 404-819 form a pocket region; the sequence is TPVSTAMTTA…NEMFIPSVKP (416 aa). Residues 607–728 are spacer; that stretch reads AVAKPSLAAE…PGGGGETCAE (122 aa). Positions 729-819 are domain B; the sequence is TAINVFFGKI…NEMFIPSVKP (91 aa). Residues 829-856 are disordered; that stretch reads NAEKNNHNDGQGPASPKPSPFPKLPDMS.

Belongs to the retinoblastoma protein (RB) family.

It localises to the nucleus. In terms of biological role, regulator of biological processes that recruits a histone deacetylase to control gene transcription. May play a role in the entry into mitosis, negatively regulating the cell proliferation. Formation of stable complexes with geminiviridae replication-associated proteins may create a cellular environment which favors viral DNA replication. The polypeptide is Retinoblastoma-related protein 1 (RB1) (Nicotiana tabacum (Common tobacco)).